A 50-amino-acid chain; its full sequence is Apoptotic protease-activating factor 1 (50 aa).

Residues 1 to 31 (ILKKDNYSYISFYNALIHEGYKDLAALLHSG) enclose the CARD domain. An NB-ARC domain is found at 46–50 (GGITS).

In terms of assembly, monomer. Oligomerizes to a heptameric ring, known as the apoptosome, upon binding of cytochrome c and dATP. Oligomeric Apaf-1 and pro-caspase-9 bind to each other via their respective NH2-terminal CARD domains and consecutively mature caspase-9 is released from the complex. Interacts with APIP. Interacts (via CARD and NACHT domains) with NAIP/BIRC1 (via NACHT domain). Interacts with CIAO2A.

In terms of biological role, oligomeric Apaf-1 mediates the cytochrome c-dependent autocatalytic activation of pro-caspase 9 (Apaf-3), leading to the activation of caspase-3 and apoptosis. This activation requires ATP. The protein is Apoptotic protease-activating factor 1 (APAF1) of Canis lupus familiaris (Dog).